The following is a 344-amino-acid chain: Isopentenyl-diphosphate delta-isomerase (344 aa).

A substrate-binding site is contributed by 9–10; the sequence is RK. FMN-binding positions include 65 to 67, serine 95, and asparagine 124; that span reads AMT. Glutamine 154 is a substrate binding site. Position 155 (glutamate 155) interacts with Mg(2+). FMN is bound by residues lysine 185, threonine 215, 259–261, and 280–281; these read GVR and SG.

It belongs to the IPP isomerase type 2 family. Homooctamer. Dimer of tetramers. The cofactor is FMN. Requires NADPH as cofactor. Mg(2+) serves as cofactor.

The protein localises to the cytoplasm. The catalysed reaction is isopentenyl diphosphate = dimethylallyl diphosphate. In terms of biological role, involved in the biosynthesis of isoprenoids. Catalyzes the 1,3-allylic rearrangement of the homoallylic substrate isopentenyl (IPP) to its allylic isomer, dimethylallyl diphosphate (DMAPP). The sequence is that of Isopentenyl-diphosphate delta-isomerase from Lacticaseibacillus casei (strain BL23) (Lactobacillus casei).